Reading from the N-terminus, the 396-residue chain is Elongation factor Tu (396 aa).

The 197-residue stretch at 10–206 folds into the tr-type G domain; that stretch reads KPHVNIGTIG…AVDSYIPDPE (197 aa). A G1 region spans residues 19 to 26; sequence GHVDHGKT. 19–26 contacts GTP; that stretch reads GHVDHGKT. Residue T26 coordinates Mg(2+). A G2 region spans residues 60–64; sequence GITIA. The segment at 81–84 is G3; it reads DCPG. Residues 81 to 85 and 136 to 139 each bind GTP; these read DCPGH and NKAD. The interval 136–139 is G4; it reads NKAD. The tract at residues 174–176 is G5; it reads SAL.

Belongs to the TRAFAC class translation factor GTPase superfamily. Classic translation factor GTPase family. EF-Tu/EF-1A subfamily. Monomer.

It localises to the cytoplasm. It carries out the reaction GTP + H2O = GDP + phosphate + H(+). Its function is as follows. GTP hydrolase that promotes the GTP-dependent binding of aminoacyl-tRNA to the A-site of ribosomes during protein biosynthesis. The sequence is that of Elongation factor Tu from Pelobacter propionicus (strain DSM 2379 / NBRC 103807 / OttBd1).